Reading from the N-terminus, the 632-residue chain is Chaperone protein DnaK (632 aa).

Residue T198 is modified to Phosphothreonine; by autocatalysis. The disordered stretch occupies residues 524-557 (RREAVDAKNHADSLVHSTEKALAEHGSKIEDSER).

This sequence belongs to the heat shock protein 70 family.

In terms of biological role, acts as a chaperone. The protein is Chaperone protein DnaK of Nitrobacter hamburgensis (strain DSM 10229 / NCIMB 13809 / X14).